A 123-amino-acid chain; its full sequence is Small ribosomal subunit protein uS12cz/uS12cy (123 aa).

Belongs to the universal ribosomal protein uS12 family. As to quaternary structure, part of the 30S ribosomal subunit.

It is found in the plastid. It localises to the chloroplast. Its function is as follows. With S4 and S5 plays an important role in translational accuracy. Located at the interface of the 30S and 50S subunits. The sequence is that of Small ribosomal subunit protein uS12cz/uS12cy (rps12-A) from Atropa belladonna (Belladonna).